The sequence spans 64 residues: Large ribosomal subunit protein bL35 (64 aa).

Positions 1–56 are disordered; that stretch reads MPKMKSNKSVAARFKLTGSGQLKRTRPGKRHKLSKKSSQEKRNLSKQPLVDKGQVG. Residues 23 to 35 are compositionally biased toward basic residues; that stretch reads KRTRPGKRHKLSK.

Belongs to the bacterial ribosomal protein bL35 family.

The chain is Large ribosomal subunit protein bL35 from Chlamydia abortus (strain DSM 27085 / S26/3) (Chlamydophila abortus).